Reading from the N-terminus, the 292-residue chain is NAD kinase (292 aa).

Asp72 (proton acceptor) is an active-site residue. NAD(+)-binding positions include 72–73 (DG), 146–147 (NE), His157, Arg174, Asp176, and 187–192 (TAYSLS).

It belongs to the NAD kinase family. A divalent metal cation is required as a cofactor.

The protein resides in the cytoplasm. The catalysed reaction is NAD(+) + ATP = ADP + NADP(+) + H(+). Functionally, involved in the regulation of the intracellular balance of NAD and NADP, and is a key enzyme in the biosynthesis of NADP. Catalyzes specifically the phosphorylation on 2'-hydroxyl of the adenosine moiety of NAD to yield NADP. The polypeptide is NAD kinase (Shewanella loihica (strain ATCC BAA-1088 / PV-4)).